A 394-amino-acid polypeptide reads, in one-letter code: NAD(P)H-quinone oxidoreductase subunit H (394 aa).

It belongs to the complex I 49 kDa subunit family. In terms of assembly, NDH-1 can be composed of about 15 different subunits; different subcomplexes with different compositions have been identified which probably have different functions.

It is found in the cellular thylakoid membrane. The enzyme catalyses a plastoquinone + NADH + (n+1) H(+)(in) = a plastoquinol + NAD(+) + n H(+)(out). It catalyses the reaction a plastoquinone + NADPH + (n+1) H(+)(in) = a plastoquinol + NADP(+) + n H(+)(out). Its function is as follows. NDH-1 shuttles electrons from an unknown electron donor, via FMN and iron-sulfur (Fe-S) centers, to quinones in the respiratory and/or the photosynthetic chain. The immediate electron acceptor for the enzyme in this species is believed to be plastoquinone. Couples the redox reaction to proton translocation, and thus conserves the redox energy in a proton gradient. Cyanobacterial NDH-1 also plays a role in inorganic carbon-concentration. This is NAD(P)H-quinone oxidoreductase subunit H from Trichodesmium erythraeum (strain IMS101).